Reading from the N-terminus, the 367-residue chain is Aspartate beta-hydroxylase domain-containing protein 1 (367 aa).

A disordered region spans residues 1–27; the sequence is MWRGSSAGGSQGAAMEGTGGELGGQGN. Residues 1–49 lie on the Cytoplasmic side of the membrane; sequence MWRGSSAGGSQGAAMEGTGGELGGQGNWGLEDAPGLLARASLPIMPAWP. A helical transmembrane segment spans residues 50 to 72; sequence LPLASSALTLLLGALTSLFLWYC. Residues 73–367 are Lumenal-facing; that stretch reads YRLGSQDMQA…ALDFVFAPDP (295 aa). The interval 88-122 is disordered; that stretch reads RAGAVGGRPGGCSEAGRPSPGRSGESGEGPRTEGL. Phosphoserine is present on Ser-106.

Belongs to the aspartyl/asparaginyl beta-hydroxylase family.

It is found in the membrane. The protein is Aspartate beta-hydroxylase domain-containing protein 1 (ASPHD1) of Bos taurus (Bovine).